The primary structure comprises 269 residues: UPF0329 protein ECU04_1660 (269 aa).

Over residues 1–12 (MEERERGKEKGS) the composition is skewed to basic and acidic residues. Positions 1–74 (MEERERGKEK…SPKEKSKGEE (74 aa)) are disordered. The span at 13–23 (KGKGRKKRGKK) shows a compositional bias: basic residues. Residues 24 to 36 (GAGEAKEESKEED) are compositionally biased toward basic and acidic residues. A compositionally biased stretch (acidic residues) spans 37–51 (RGEEEEESVEADVPV).

This sequence belongs to the UPF0329 family.

This chain is UPF0329 protein ECU04_1660, found in Encephalitozoon cuniculi (strain GB-M1) (Microsporidian parasite).